The sequence spans 265 residues: 4-hydroxy-tetrahydrodipicolinate reductase (265 aa).

Residues 7 to 12, Asp-33, 96 to 98, and 120 to 123 each bind NAD(+); these read GASGRM, GTT, and AANF. Catalysis depends on His-153, which acts as the Proton donor/acceptor. (S)-2,3,4,5-tetrahydrodipicolinate is bound at residue His-154. Residue Lys-157 is the Proton donor of the active site. Position 163 to 164 (163 to 164) interacts with (S)-2,3,4,5-tetrahydrodipicolinate; sequence GT.

The protein belongs to the DapB family.

The protein localises to the cytoplasm. It carries out the reaction (S)-2,3,4,5-tetrahydrodipicolinate + NAD(+) + H2O = (2S,4S)-4-hydroxy-2,3,4,5-tetrahydrodipicolinate + NADH + H(+). It catalyses the reaction (S)-2,3,4,5-tetrahydrodipicolinate + NADP(+) + H2O = (2S,4S)-4-hydroxy-2,3,4,5-tetrahydrodipicolinate + NADPH + H(+). It participates in amino-acid biosynthesis; L-lysine biosynthesis via DAP pathway; (S)-tetrahydrodipicolinate from L-aspartate: step 4/4. Its function is as follows. Catalyzes the conversion of 4-hydroxy-tetrahydrodipicolinate (HTPA) to tetrahydrodipicolinate. In Cupriavidus taiwanensis (strain DSM 17343 / BCRC 17206 / CCUG 44338 / CIP 107171 / LMG 19424 / R1) (Ralstonia taiwanensis (strain LMG 19424)), this protein is 4-hydroxy-tetrahydrodipicolinate reductase.